A 445-amino-acid polypeptide reads, in one-letter code: Phosphoglucosamine mutase (445 aa).

Catalysis depends on S102, which acts as the Phosphoserine intermediate. S102, D241, D243, and D245 together coordinate Mg(2+). The residue at position 102 (S102) is a Phosphoserine.

The protein belongs to the phosphohexose mutase family. Mg(2+) serves as cofactor. In terms of processing, activated by phosphorylation.

It catalyses the reaction alpha-D-glucosamine 1-phosphate = D-glucosamine 6-phosphate. In terms of biological role, catalyzes the conversion of glucosamine-6-phosphate to glucosamine-1-phosphate. In Shewanella sp. (strain ANA-3), this protein is Phosphoglucosamine mutase.